The sequence spans 333 residues: Adenosine deaminase (333 aa).

The Zn(2+) site is built by His12 and His14. His14, Asp16, and Gly170 together coordinate substrate. Residue His197 participates in Zn(2+) binding. The active-site Proton donor is Glu200. Position 278 (Asp278) interacts with Zn(2+). Asp279 contacts substrate.

The protein belongs to the metallo-dependent hydrolases superfamily. Adenosine and AMP deaminases family. Adenosine deaminase subfamily. Zn(2+) is required as a cofactor.

It catalyses the reaction adenosine + H2O + H(+) = inosine + NH4(+). The enzyme catalyses 2'-deoxyadenosine + H2O + H(+) = 2'-deoxyinosine + NH4(+). Functionally, catalyzes the hydrolytic deamination of adenosine and 2-deoxyadenosine. This chain is Adenosine deaminase, found in Escherichia coli (strain SMS-3-5 / SECEC).